A 186-amino-acid chain; its full sequence is Elongation factor P (186 aa).

It belongs to the elongation factor P family.

It localises to the cytoplasm. It participates in protein biosynthesis; polypeptide chain elongation. Functionally, involved in peptide bond synthesis. Stimulates efficient translation and peptide-bond synthesis on native or reconstituted 70S ribosomes in vitro. Probably functions indirectly by altering the affinity of the ribosome for aminoacyl-tRNA, thus increasing their reactivity as acceptors for peptidyl transferase. This Coprothermobacter proteolyticus (strain ATCC 35245 / DSM 5265 / OCM 4 / BT) protein is Elongation factor P.